We begin with the raw amino-acid sequence, 102 residues long: Citrate lyase acyl carrier protein (102 aa).

Serine 14 is modified (O-(phosphoribosyl dephospho-coenzyme A)serine).

The protein belongs to the CitD family. In terms of assembly, oligomer with a subunit composition of (alpha,beta,gamma)6.

The protein resides in the cytoplasm. Functionally, covalent carrier of the coenzyme of citrate lyase. The sequence is that of Citrate lyase acyl carrier protein from Streptococcus equi subsp. zooepidemicus (strain MGCS10565).